A 799-amino-acid polypeptide reads, in one-letter code: Homeobox protein engrailed (799 aa).

Disordered regions lie at residues 189 to 331, 369 to 444, 554 to 664, and 678 to 705; these read LPSR…DATK, GNFL…SLRQ, HPFL…DKAK, and SDRP…RTAF. A compositionally biased stretch (polar residues) spans 210 to 222; the sequence is QSPSTSIRSNLVS. 2 stretches are compositionally biased toward basic and acidic residues: residues 228 to 239 and 246 to 256; these read SRRDDQETSDSC and RAINDSERYDV. 2 stretches are compositionally biased toward polar residues: residues 284-299 and 377-401; these read LNLT…QLFH and HTFQ…SSPD. Residues 416-431 show a composition bias toward low complexity; that stretch reads ESLSSPSSSSSSSRSS. Composition is skewed to basic and acidic residues over residues 608-619 and 629-648; these read DQKKRSRDESAS and VHLK…EKGN. Positions 698–757 form a DNA-binding region, homeobox; that stretch reads EKRPRTAFTNDQLQRLKREFDECRYLTETRRKNLADELGLTESQIKIWFQNKRAKIKKSV.

Belongs to the engrailed homeobox family. As to expression, expressed in the dorsal ectoderm of early gastrulae in a band corresponding to the peripheral area of the presumptive shell gland. Also expressed at four points along the posterior ectoderm. In late gastrulae, it is predominantly expressed in the peripheral ectoderm of the shell gland and in spots at the posterior end behind the presumptive foot. Expressed in late trochophore larvae at four points behind the foot, at two locations at the base of the foot and in the peripheral ectoderm of the shell gland.

Its subcellular location is the nucleus. May be involved in shell and shell gland formation during development. The protein is Homeobox protein engrailed of Lymnaea stagnalis (Great pond snail).